A 484-amino-acid polypeptide reads, in one-letter code: Cysteine--tRNA ligase (484 aa).

Zn(2+) is bound at residue Cys29. The short motif at Ile31–His41 is the 'HIGH' region element. The Zn(2+) site is built by Cys215, His240, and Glu244. Residues Lys272–Ser276 carry the 'KMSKS' region motif. Residue Lys275 participates in ATP binding.

This sequence belongs to the class-I aminoacyl-tRNA synthetase family. Monomer. It depends on Zn(2+) as a cofactor.

The protein localises to the cytoplasm. It carries out the reaction tRNA(Cys) + L-cysteine + ATP = L-cysteinyl-tRNA(Cys) + AMP + diphosphate. This is Cysteine--tRNA ligase from Rippkaea orientalis (strain PCC 8801 / RF-1) (Cyanothece sp. (strain PCC 8801)).